A 329-amino-acid chain; its full sequence is 4-hydroxythreonine-4-phosphate dehydrogenase (329 aa).

The substrate site is built by histidine 136 and threonine 137. A divalent metal cation contacts are provided by histidine 166, histidine 211, and histidine 266. Substrate is bound by residues lysine 274, asparagine 283, and arginine 292.

The protein belongs to the PdxA family. Homodimer. Zn(2+) serves as cofactor. The cofactor is Mg(2+). It depends on Co(2+) as a cofactor.

It localises to the cytoplasm. The catalysed reaction is 4-(phosphooxy)-L-threonine + NAD(+) = 3-amino-2-oxopropyl phosphate + CO2 + NADH. The protein operates within cofactor biosynthesis; pyridoxine 5'-phosphate biosynthesis; pyridoxine 5'-phosphate from D-erythrose 4-phosphate: step 4/5. Its function is as follows. Catalyzes the NAD(P)-dependent oxidation of 4-(phosphooxy)-L-threonine (HTP) into 2-amino-3-oxo-4-(phosphooxy)butyric acid which spontaneously decarboxylates to form 3-amino-2-oxopropyl phosphate (AHAP). The protein is 4-hydroxythreonine-4-phosphate dehydrogenase of Escherichia coli O139:H28 (strain E24377A / ETEC).